We begin with the raw amino-acid sequence, 522 residues long: Sorting nexin-1 (522 aa).

Residues M1 to Q142 are disordered. Phosphoserine occurs at positions 32 and 39. Positions E35–D45 are enriched in acidic residues. Phosphothreonine occurs at positions 41 and 48. Residues S58 and S72 each carry the phosphoserine modification. Positions E132–Q142 are enriched in acidic residues. Residues F143–R272 enclose the PX domain. 3 residues coordinate a 1,2-diacyl-sn-glycero-3-phospho-(1D-myo-inositol-3-phosphate): R186, S188, and K214. S188 carries the phosphoserine modification. K237 bears the N6-acetyllysine mark. Position 238 (R238) interacts with a 1,2-diacyl-sn-glycero-3-phospho-(1D-myo-inositol-3-phosphate). S280 carries the phosphoserine modification. Residues G281–M298 form a membrane-binding amphipathic helix region. One can recognise a BAR domain in the interval M302–S522.

Belongs to the sorting nexin family. As to quaternary structure, predominantly forms heterodimers with BAR domain-containing sorting nexins SNX5, SNX6 and SNX32; can self-associate to form homodimers. The heterodimers are proposed to self-assemble into helical arrays on the membrane to stabilize and expand local membrane curvature underlying endosomal tubule formation. Thought to be a component of the originally described retromer complex (also called SNX-BAR retromer) which is a pentamer containing the heterotrimeric retromer cargo-selective complex (CSC), also described as vacuolar protein sorting subcomplex (VPS) and a heterodimeric membrane-deforming subcomplex formed between SNX1 or SNX2 and SNX5 or SNX6 (also called SNX-BAR subcomplex); the respective CSC and SNX-BAR subcomplexes associate with low affinity. Interacts with SNX5, SNX6, SNX32, VPS26A, VPS29, VPS35, DRD5, DENND5A, KALRN, RHOG (GDP-bound form). The interaction with SNX2 is reported controversially. Interacts with DNAJC13; prevented by presence of HGS. Interacts with HGS.

It is found in the endosome membrane. The protein localises to the golgi apparatus. The protein resides in the trans-Golgi network membrane. It localises to the early endosome membrane. Its subcellular location is the cell projection. It is found in the lamellipodium. Its function is as follows. Involved in several stages of intracellular trafficking. Interacts with membranes containing phosphatidylinositol 3-phosphate (PtdIns(3P)) or phosphatidylinositol 3,5-bisphosphate (PtdIns(3,5)P2). Acts in part as component of the retromer membrane-deforming SNX-BAR subcomplex. The SNX-BAR retromer mediates retrograde transport of cargo proteins from endosomes to the trans-Golgi network (TGN) and is involved in endosome-to-plasma membrane transport for cargo protein recycling. The SNX-BAR subcomplex functions to deform the donor membrane into a tubular profile called endosome-to-TGN transport carrier (ETC). Can sense membrane curvature and has in vitro vesicle-to-membrane remodeling activity. Involved in retrograde endosome-to-TGN transport of lysosomal enzyme receptors (IGF2R, M6PR and SORT1). Plays a role in targeting ligand-activated EGFR to the lysosomes for degradation after endocytosis from the cell surface and release from the Golgi. Involvement in retromer-independent endocytic trafficking of P2RY1 and lysosomal degradation of protease-activated receptor-1/F2R. Promotes KALRN- and RHOG-dependent but retromer-independent membrane remodeling such as lamellipodium formation; the function is dependent on GEF activity of KALRN. Required for endocytosis of DRD5 upon agonist stimulation but not for basal receptor trafficking. This is Sorting nexin-1 (SNX1) from Bos taurus (Bovine).